The chain runs to 453 residues: MDQTSIQTSDGEAATANTLKYMPGFGNDFETESLPGALPQGQNSPQKCNYGLYAEQLSGSPFTAPRGTNERSWLYRIRPSVRHTRRFSNASYPLWKTAPCLDEHSLPLGQLRWDPIPAPAERLTFLEGVRTITTAGDAATQVGMSAHAYVFNEDMVDDYFFNADGELLIVPQLGAIRVFTEMGIMDVEPLEICLIPRGMMFKILKSGEQTVWRGYICENYGAKFTLPDRGPIGANCLANPRDFKTPVAAFEDKETPCRVHVKWCGKFYVTEIGHSPLDVVAWHGNYAPFKYDLRTFSPVGAIRFDHPDPSIFSVLTAPSEDAGTANVDFVIFPPRWLVAEHTFRPPWYHRNIMSEFMGLIHGQYDAKEEGFVPGGISLHNMMLPHGPDALAFEKASNTELKPVKLDHTMAFMFETRYAQQLTKYAAELETLQDNYLECWDGLERKFDGTPGIK.

Histidine 306 (proton acceptor) is an active-site residue. Residues histidine 349 and glutamate 355 each coordinate Fe cation. The homogentisate site is built by tyrosine 364 and histidine 385. Histidine 385 is a Fe cation binding site.

The protein belongs to the homogentisate dioxygenase family. In terms of assembly, hexamer; dimer of trimers. It depends on Fe cation as a cofactor.

The enzyme catalyses homogentisate + O2 = 4-maleylacetoacetate + H(+). Its pathway is amino-acid degradation; L-phenylalanine degradation; acetoacetate and fumarate from L-phenylalanine: step 4/6. Its function is as follows. Involved in the catabolism of homogentisate (2,5-dihydroxyphenylacetate or 2,5-OH-PhAc), a central intermediate in the degradation of phenylalanine and tyrosine. Catalyzes the oxidative ring cleavage of the aromatic ring of homogentisate to yield maleylacetoacetate. In Rhizobium johnstonii (strain DSM 114642 / LMG 32736 / 3841) (Rhizobium leguminosarum bv. viciae), this protein is Homogentisate 1,2-dioxygenase.